Consider the following 70-residue polypeptide: DNA-directed RNA polymerase subunit epsilon (70 aa).

The protein belongs to the RNA polymerase subunit epsilon family. As to quaternary structure, RNAP is composed of a core of 2 alpha, a beta and a beta' subunit. The core is associated with a delta subunit, and at least one of epsilon or omega. When a sigma factor is associated with the core the holoenzyme is formed, which can initiate transcription.

The enzyme catalyses RNA(n) + a ribonucleoside 5'-triphosphate = RNA(n+1) + diphosphate. A non-essential component of RNA polymerase (RNAP). In Bacillus cereus (strain Q1), this protein is DNA-directed RNA polymerase subunit epsilon.